A 201-amino-acid polypeptide reads, in one-letter code: Inosine triphosphate pyrophosphatase (201 aa).

16–21 (TGNAKK) provides a ligand contact to ITP. Glu44 contacts Mg(2+). ITP-binding positions include Lys56, 72–73 (DT), Lys89, 148–151 (FGWD), Lys171, and 176–177 (HR).

The protein belongs to the HAM1 NTPase family. As to quaternary structure, homodimer. Requires Mg(2+) as cofactor. Mn(2+) serves as cofactor.

It is found in the cytoplasm. It catalyses the reaction ITP + H2O = IMP + diphosphate + H(+). It carries out the reaction dITP + H2O = dIMP + diphosphate + H(+). The catalysed reaction is XTP + H2O = XMP + diphosphate + H(+). Its function is as follows. Pyrophosphatase that hydrolyzes non-canonical purine nucleotides such as inosine triphosphate (ITP), deoxyinosine triphosphate (dITP) or xanthosine 5'-triphosphate (XTP) to their respective monophosphate derivatives. The enzyme does not distinguish between the deoxy- and ribose forms. Probably excludes non-canonical purines from RNA and DNA precursor pools, thus preventing their incorporation into RNA and DNA and avoiding chromosomal lesions. This is Inosine triphosphate pyrophosphatase from Sorghum bicolor (Sorghum).